Here is a 178-residue protein sequence, read N- to C-terminus: Caveolin-1 (178 aa).

S2 carries the N-acetylserine modification. Phosphoserine is present on S2. Residues 2–94 are required for homooligomerization; it reads SGGKYVDSEG…WKASFTTFTV (93 aa). Over 2–104 the chain is Cytoplasmic; that stretch reads SGGKYVDSEG…TKYWFYRLLS (103 aa). K5 carries the post-translational modification N6-acetyllysine; alternate. K5 is covalently cross-linked (Glycyl lysine isopeptide (Lys-Gly) (interchain with G-Cter in ubiquitin); alternate). Y6 bears the Phosphotyrosine mark. S9 carries the post-translational modification Phosphoserine. A Phosphotyrosine; by ABL1 modification is found at Y14. Y25 carries the post-translational modification Phosphotyrosine. Residues K26 and K30 each participate in a glycyl lysine isopeptide (Lys-Gly) (interchain with G-Cter in ubiquitin) cross-link. A Phosphoserine modification is found at S37. Glycyl lysine isopeptide (Lys-Gly) (interchain with G-Cter in ubiquitin) cross-links involve residues K39, K47, and K57. The interval 82–94 is interaction with CAVIN3; that stretch reads DGIWKASFTTFTV. Positions 105 to 125 form an intramembrane region, helical; sequence ALFGIPMALVWGIYFAILSFL. Residues 126–178 lie on the Cytoplasmic side of the membrane; it reads HIWAVVPCIKSFLIEIQCISRVYSIYVHTVCDPLFEAVGKIFSNVRINLQKEI. The tract at residues 131-142 is interacts with SPRY1, SPRY2, SPRY3 and SPRY4; sequence VPCIKSFLIEIQ. S-palmitoyl cysteine attachment occurs at residues C133, C143, and C156. Positions 149 to 160 are interacts with SPRY1, SPRY2, and SPRY4; that stretch reads SIYVHTVCDPLF. Residues 167–178 form an interacts with SPRY1, SPRY2, SPRY3 and SPRY4 region; the sequence is FSNVRINLQKEI.

Belongs to the caveolin family. In terms of assembly, homooligomer. Interacts with GLIPR2. Interacts with NOSTRIN. Interacts with SNAP25 and STX1A. Interacts (via the N-terminus) with DPP4; the interaction is direct. Interacts with CTNNB1, CDH1 and JUP. Interacts with PACSIN2; this interaction induces membrane tubulation. Interacts with SLC7A9. Interacts with BMX and BTK. Interacts with TGFBR1. Interacts with CAVIN3 (via leucine-zipper domain) in a cholesterol-sensitive manner. Interacts with CAVIN1. Interacts with EHD2 in a cholesterol-dependent manner. Forms a ternary complex with UBXN6 and VCP; mediates CAV1 targeting to lysosomes for degradation. Interacts with ABCG1; this interaction regulates ABCG1-mediated cholesterol efflux. Interacts with NEU3; this interaction enhances NEU3 sialidase activity within caveola. Interacts (via C-terminus) with SPRY1, SPRY2 (via C-terminus), SPRY3, and SPRY4. Interacts with IGFBP5; this interaction allows trafficking of IGFBP5 from the plasma membrane to the nucleus. Post-translationally, phosphorylated at Tyr-14 by ABL1 in response to oxidative stress. In terms of processing, ubiquitinated. Undergo monoubiquitination and multi- and/or polyubiquitination. Monoubiquitination of N-terminal lysines promotes integration in a ternary complex with UBXN6 and VCP which promotes oligomeric CAV1 targeting to lysosomes for degradation. Ubiquitinated by ZNRF1; leading to degradation and modulation of the TLR4-mediated immune response.

The protein resides in the golgi apparatus membrane. It is found in the cell membrane. It localises to the membrane. Its subcellular location is the caveola. The protein localises to the membrane raft. In terms of biological role, may act as a scaffolding protein within caveolar membranes. Forms a stable heterooligomeric complex with CAV2 that targets to lipid rafts and drives caveolae formation. Mediates the recruitment of CAVIN proteins (CAVIN1/2/3/4) to the caveolae. Interacts directly with G-protein alpha subunits and can functionally regulate their activity. Involved in the costimulatory signal essential for T-cell receptor (TCR)-mediated T-cell activation. Its binding to DPP4 induces T-cell proliferation and NF-kappa-B activation in a T-cell receptor/CD3-dependent manner. Recruits CTNNB1 to caveolar membranes and may regulate CTNNB1-mediated signaling through the Wnt pathway. Negatively regulates TGFB1-mediated activation of SMAD2/3 by mediating the internalization of TGFBR1 from membrane rafts leading to its subsequent degradation. Binds 20(S)-hydroxycholesterol (20(S)-OHC). In Papio anubis (Olive baboon), this protein is Caveolin-1 (CAV1).